The following is a 231-amino-acid chain: Eukaryotic translation initiation factor 4E-1 (231 aa).

2 EIF4G-binding regions span residues 56 to 59 (HPLE) and 66 to 102 (FDNP…NNIH). MRNA is bound by residues 74-79 (RQTAWG), lysine 106, and 124-125 (WE). Cysteine 129 and cysteine 167 are joined by a disulfide. Residues 150-159 (YTLLAMIGHQ) are EIF4G-binding. MRNA is bound by residues 174–179 (RAKGEK) and 219–223 (KRLDR).

The protein belongs to the eukaryotic initiation factor 4E family. As to quaternary structure, EIF4F is a multi-subunit complex, the composition of which varies with external and internal environmental conditions. It is composed of at least EIF4A, EIF4E and EIF4G. EIF4E is also known to interact with other partners. In higher plants two isoforms of EIF4F have been identified, named isoform EIF4F and isoform EIF(iso)4F. Isoform EIF4F has subunits p220 and p26, whereas isoform EIF(iso)4F has subunits p82 and p28. (Microbial infection) Interacts with potyvirus viral genome-linked protein (VPg); mostly with tobacco etch virus (TEV-HAT) VPg and, to a lower extent, with potato virus Y (PVY-LYE84 and PVY-LYE90) and pepper mottle virus (PepMoV) VPg. In terms of processing, according to the redox status, the Cys-129-Cys-167 disulfide bridge may have a role in regulating protein function by affecting its ability to bind capped mRNA.

The protein localises to the nucleus. Its subcellular location is the cytoplasm. In terms of biological role, component of the protein complex eIF4F, which is involved in the recognition of the mRNA cap, ATP-dependent unwinding of 5'-terminal secondary structure and recruitment of mRNA to the ribosome. Recognizes and binds the 7-methylguanosine-containing mRNA cap during an early step in the initiation of protein synthesis and facilitates ribosome binding by inducing the unwinding of the mRNAs secondary structures. Key component of recessive resistance to potyviruses. Its function is as follows. (Microbial infection) Susceptibility host factor required for viral infection (e.g. potato virus Y (PVY), pepper mottle virus (PepMoV) and tobacco etch virus (TEV)) by recruiting viral RNAs to the host ribosomal complex via an interaction with viral genome-linked protein (VPg). The polypeptide is Eukaryotic translation initiation factor 4E-1 (Solanum lycopersicum (Tomato)).